We begin with the raw amino-acid sequence, 599 residues long: Protein ref(2)P (599 aa).

The PB1 domain occupies Glu-3–Ala-88. Residues His-122–Gly-173 form a ZZ-type zinc finger. Residues Cys-127, Cys-130, Cys-142, Cys-145, Cys-151, Cys-154, His-160, and His-163 each contribute to the Zn(2+) site. Disordered regions lie at residues Arg-192–Arg-225, Thr-245–Asp-319, Gly-357–Glu-453, and Ala-507–Arg-544. Low complexity predominate over residues Pro-199–Glu-211. Residues Lys-276–Glu-286 are compositionally biased toward basic and acidic residues. The segment covering Asn-291–Asp-319 has biased composition (polar residues). The span at Gln-375 to Ala-411 shows a compositional bias: low complexity. Repeat copies occupy residues Ser-386–Pro-393, Ala-399–Ser-406, and Ala-407–Pro-413. Residues Ser-386–Pro-413 form a 3 X 8 AA repeats of S-A-N-Q-S-X-X-P region. A compositionally biased stretch (polar residues) spans Thr-412–Gln-423. Low complexity predominate over residues Thr-511–Ser-536. Residues His-550–Ser-595 form the UBA domain.

Interacts with aPKC and Traf6.

The protein localises to the nucleus. Its subcellular location is the cytoplasm. Functionally, required for selective autophagy activation by ubiquitinated proteins. Implicated in sigma rhabdovirus multiplication and necessary for male fertility. Involved in activating transcription of Drs. The polypeptide is Protein ref(2)P (ref(2)P) (Drosophila simulans (Fruit fly)).